The chain runs to 379 residues: Cytochrome b (379 aa).

A run of 4 helical transmembrane segments spans residues Phe33–Met53, Trp77–Val98, Trp113–Leu133, and Phe178–Leu198. Heme b contacts are provided by His83 and His97. His182 and His196 together coordinate heme b. His201 is an a ubiquinone binding site. The next 4 helical transmembrane spans lie at Ile226–Phe246, Leu288–Asn308, Ile320–Gly340, and Phe347–Pro367.

It belongs to the cytochrome b family. In terms of assembly, the cytochrome bc1 complex contains 11 subunits: 3 respiratory subunits (MT-CYB, CYC1 and UQCRFS1), 2 core proteins (UQCRC1 and UQCRC2) and 6 low-molecular weight proteins (UQCRH/QCR6, UQCRB/QCR7, UQCRQ/QCR8, UQCR10/QCR9, UQCR11/QCR10 and a cleavage product of UQCRFS1). This cytochrome bc1 complex then forms a dimer. The cofactor is heme b.

The protein resides in the mitochondrion inner membrane. In terms of biological role, component of the ubiquinol-cytochrome c reductase complex (complex III or cytochrome b-c1 complex) that is part of the mitochondrial respiratory chain. The b-c1 complex mediates electron transfer from ubiquinol to cytochrome c. Contributes to the generation of a proton gradient across the mitochondrial membrane that is then used for ATP synthesis. The polypeptide is Cytochrome b (MT-CYB) (Necromys amoenus (Pleasant bolo mouse)).